Consider the following 269-residue polypeptide: tRNA uridine(34) hydroxylase (269 aa).

A Rhodanese domain is found at 121 to 214; sequence SQPDVLVIDT…YLERTHNKNG (94 aa). The active-site Cysteine persulfide intermediate is the cysteine 174.

The protein belongs to the TrhO family.

The enzyme catalyses uridine(34) in tRNA + AH2 + O2 = 5-hydroxyuridine(34) in tRNA + A + H2O. In terms of biological role, catalyzes oxygen-dependent 5-hydroxyuridine (ho5U) modification at position 34 in tRNAs. The sequence is that of tRNA uridine(34) hydroxylase from Wolbachia sp. subsp. Brugia malayi (strain TRS).